A 292-amino-acid chain; its full sequence is Ribosomal protein L11 methyltransferase (292 aa).

S-adenosyl-L-methionine-binding residues include T143, G164, D186, and N227.

This sequence belongs to the methyltransferase superfamily. PrmA family.

It is found in the cytoplasm. It carries out the reaction L-lysyl-[protein] + 3 S-adenosyl-L-methionine = N(6),N(6),N(6)-trimethyl-L-lysyl-[protein] + 3 S-adenosyl-L-homocysteine + 3 H(+). Methylates ribosomal protein L11. This chain is Ribosomal protein L11 methyltransferase, found in Hahella chejuensis (strain KCTC 2396).